The primary structure comprises 1737 residues: Myosin-M heavy chain (1737 aa).

The Myosin N-terminal SH3-like domain maps to 4–55; sequence LEGDIVWVPHTVNGYCRGKIIGYNEKNQVTVRLLELNEEIKINEQLIQNYNQ. A Myosin motor domain is found at 59-886; sequence KDFSDMVEIQ…LYIYLEKKRY (828 aa). 154–161 provides a ligand contact to ATP; sequence GESGSGKT. Residues 640 to 727 are disordered; the sequence is KSNDNNSNNN…NNNSSNNKKS (88 aa). Low complexity-rich tracts occupy residues 641–663 and 679–724; these read SNDNNSNNNNSNNNSSSSSSSQS and NSGS…SSNN. The actin-binding stretch occupies residues 754–761; sequence YIRCIKPN. 2 consecutive IQ domains span residues 889–918 and 912–941; these read LVDSVLKIQAFFKMIKIRNQYKRNKESSLF and NKESSLFLQTLIRAQRAKKDFEQLVILENK. Positions 926–1039 form a coiled coil; that stretch reads QRAKKDFEQL…KKKNEQNLSL (114 aa). The span at 947-1028 shows a compositional bias: basic and acidic residues; the sequence is RKKELERQRK…IEKKRKEEEK (82 aa). Disordered regions lie at residues 947 to 1099, 1117 to 1199, 1266 to 1290, and 1304 to 1364; these read RKKE…PSTK, LHGS…PNFN, GINKPIPQRTISSSENSPLSRANSS, and SLST…SNED. The segment covering 1044 to 1070 has biased composition (low complexity); the sequence is ITNSPSLINTTTTTTTTTTTTTNTSSP. The span at 1071 to 1081 shows a compositional bias: pro residues; the sequence is PLSPPISPRPS. Positions 1082 to 1098 are enriched in low complexity; the sequence is TPSSTSSSSSTTSSPST. Basic and acidic residues predominate over residues 1121-1131; sequence SHSDKNSKEDN. The segment covering 1132–1141 has biased composition (low complexity); it reads NSNNNNNGDS. The segment covering 1143–1153 has biased composition (polar residues); sequence IILSSDSSFGQ. The segment covering 1162 to 1171 has biased composition (pro residues); sequence PTPPPPPPLK. Composition is skewed to polar residues over residues 1180–1198 and 1274–1288; these read GVENNSSPNLWSHRNSPNF and RTISSSENSPLSRAN. The segment covering 1304-1359 has biased composition (low complexity); that stretch reads SLSTSTTPSTPTTPKTPTTLSSSSVSTSTSLSSVSSSVSSSSSSSIPTPIIESTPS. Residues 1389-1572 enclose the DH domain; the sequence is FRIKIINELI…SDIVQSINEA (184 aa). Residues 1603–1714 form the PH domain; it reads TLLMEGTVSA…WFKQIKALIQ (112 aa).

The protein belongs to the TRAFAC class myosin-kinesin ATPase superfamily. Myosin family. Monomer.

The protein localises to the cytoplasm. Functionally, myosins are actin-based motor molecules with ATPase activity. Involved in macropinocytosis and remodeling of actin cytoskeleton. The sequence is that of Myosin-M heavy chain (myoM) from Dictyostelium discoideum (Social amoeba).